Here is a 672-residue protein sequence, read N- to C-terminus: DNA mismatch repair protein MutL (672 aa).

Over residues 443–454 (SYTSDSNQYENS) the composition is skewed to polar residues. Residues 443-469 (SYTSDSNQYENSCKSDVDKESKSKTTG) form a disordered region. The segment covering 455–465 (CKSDVDKESKS) has biased composition (basic and acidic residues).

It belongs to the DNA mismatch repair MutL/HexB family.

Functionally, this protein is involved in the repair of mismatches in DNA. It is required for dam-dependent methyl-directed DNA mismatch repair. May act as a 'molecular matchmaker', a protein that promotes the formation of a stable complex between two or more DNA-binding proteins in an ATP-dependent manner without itself being part of a final effector complex. In Clostridium botulinum (strain Eklund 17B / Type B), this protein is DNA mismatch repair protein MutL.